Consider the following 324-residue polypeptide: MATH domain and coiled-coil domain-containing protein At3g44790 (324 aa).

Residues 3-125 form the MATH domain; that stretch reads YEKFTWVIKN…NNEVKIVVEV (123 aa). Positions 241–309 form a coiled coil; sequence FKVDWLERKL…ALLEKEKAKS (69 aa).

This is MATH domain and coiled-coil domain-containing protein At3g44790 from Arabidopsis thaliana (Mouse-ear cress).